We begin with the raw amino-acid sequence, 134 residues long: Ion transport peptide-like (134 aa).

3 disulfides stabilise this stretch: C62/C98, C78/C94, and C81/C107.

It belongs to the arthropod CHH/MIH/GIH/VIH hormone family.

It localises to the secreted. The polypeptide is Ion transport peptide-like (Schistocerca gregaria (Desert locust)).